Here is a 372-residue protein sequence, read N- to C-terminus: B2 bradykinin receptor (372 aa).

The Extracellular portion of the chain corresponds to 1-34 (MFNITSQVSALNATLAQGNSCLDAEWWSWLNTIQ). 2 N-linked (GlcNAc...) asparagine glycosylation sites follow: Asn3 and Asn12. The chain crosses the membrane as a helical span at residues 35–58 (APFLWVLFVLAVLENIFVLSVFFL). The Cytoplasmic portion of the chain corresponds to 59 to 67 (HKSSCTVAE). A helical membrane pass occupies residues 68–92 (IYLGNLAVADLILAFGLPFWAITIA). Residues 93–105 (NNFDWLFGEVLCR) are Extracellular-facing. The cysteines at positions 104 and 185 are disulfide-linked. Residues 106-127 (MVNTMIQMNMYSSICFLMLVSI) traverse the membrane as a helical segment. The Cytoplasmic segment spans residues 128-149 (DRYLALVKTMSMGRMRGVRWAK). Phosphotyrosine is present on Tyr130. The chain crosses the membrane as a helical span at residues 150–172 (LYSLVIWGCALLLSSPMLVFRTM). The Extracellular segment spans residues 173–195 (KDYRDEGHNVTACLIIYPSLTWQ). An N-linked (GlcNAc...) asparagine glycan is attached at Asn181. The helical transmembrane segment at 196 to 222 (VFTNVLLNLVGFLLPLSIITFCTVQIM) threads the bilayer. Topologically, residues 223–241 (QVLRNNEMQKFKEIQTERR) are cytoplasmic. A helical membrane pass occupies residues 242-266 (ATVLVLAVLLLFVVCWLPFQIGTFL). At 267–284 (DTLRLLGFLPGCWEHVID) the chain is on the extracellular side. The helical transmembrane segment at 285–308 (LITQISSYLAYSNSCLNPLVYVIV) threads the bilayer. The Cytoplasmic portion of the chain corresponds to 309 to 364 (GKRFRKKSREVYHGLCRSGGCVSEPAQSENSMGTLRTSISVDRQIHKLQDWARSSS). Tyr320 is subject to Phosphotyrosine. Cys324 is lipidated: S-palmitoyl cysteine. Ser339 bears the Phosphoserine mark. At Thr342 the chain carries Phosphothreonine. Residues Ser346 and Ser348 each carry the phosphoserine; by GRK6 modification.

Belongs to the G-protein coupled receptor 1 family. Bradykinin receptor subfamily. BDKRB2 sub-subfamily. In terms of assembly, forms a complex with PECAM1 and GNAQ. Interacts with PECAM1.

The protein resides in the cell membrane. Functionally, receptor for bradykinin. It is associated with G proteins that activate a phosphatidylinositol-calcium second messenger system. This chain is B2 bradykinin receptor (BDKRB2), found in Cavia porcellus (Guinea pig).